The chain runs to 344 residues: Isopentenyl-diphosphate delta-isomerase (344 aa).

Position 9 to 10 (9 to 10 (RK)) interacts with substrate. FMN contacts are provided by residues 65–67 (AMT), Ser-95, and Asn-124. Gln-154 lines the substrate pocket. Glu-155 is a Mg(2+) binding site. FMN-binding positions include Lys-185, Thr-215, 259 to 261 (GVR), and 280 to 281 (SG).

Belongs to the IPP isomerase type 2 family. In terms of assembly, homooctamer. Dimer of tetramers. FMN serves as cofactor. NADPH is required as a cofactor. The cofactor is Mg(2+).

The protein resides in the cytoplasm. The catalysed reaction is isopentenyl diphosphate = dimethylallyl diphosphate. Functionally, involved in the biosynthesis of isoprenoids. Catalyzes the 1,3-allylic rearrangement of the homoallylic substrate isopentenyl (IPP) to its allylic isomer, dimethylallyl diphosphate (DMAPP). This Lacticaseibacillus paracasei (strain ATCC 334 / BCRC 17002 / CCUG 31169 / CIP 107868 / KCTC 3260 / NRRL B-441) (Lactobacillus paracasei) protein is Isopentenyl-diphosphate delta-isomerase.